The chain runs to 477 residues: Cytochrome c-552 (477 aa).

Residues 1 to 26 form the signal peptide; the sequence is MVRISTSISYLWGMVASLFLMMPAYS. A heme c-binding site is contributed by histidine 94. Cysteine 122, cysteine 125, and lysine 126 together coordinate heme. Heme c-binding residues include cysteine 160, cysteine 163, histidine 164, cysteine 209, cysteine 212, and histidine 213. 4 residues coordinate Ca(2+): glutamate 215, tyrosine 216, lysine 261, and glutamine 263. Tyrosine 216 contributes to the substrate binding site. Substrate is bound at residue histidine 264. Heme c contacts are provided by histidine 275, cysteine 282, cysteine 285, histidine 286, histidine 301, cysteine 314, cysteine 317, histidine 318, and histidine 393.

This sequence belongs to the cytochrome c-552 family. Ca(2+) serves as cofactor. Requires heme c as cofactor.

Its subcellular location is the periplasm. The catalysed reaction is 6 Fe(III)-[cytochrome c] + NH4(+) + 2 H2O = 6 Fe(II)-[cytochrome c] + nitrite + 8 H(+). It functions in the pathway nitrogen metabolism; nitrate reduction (assimilation). Its function is as follows. Catalyzes the reduction of nitrite to ammonia, consuming six electrons in the process. The protein is Cytochrome c-552 of Pectobacterium carotovorum subsp. carotovorum (strain PC1).